The sequence spans 143 residues: Ribosome maturation factor RimP (143 aa).

This sequence belongs to the RimP family.

Its subcellular location is the cytoplasm. Its function is as follows. Required for maturation of 30S ribosomal subunits. This chain is Ribosome maturation factor RimP, found in Neisseria meningitidis serogroup C (strain 053442).